We begin with the raw amino-acid sequence, 185 residues long: Ribosome-recycling factor (185 aa).

The disordered stretch occupies residues 138 to 185 (ALKKQEKDGEITEDEERRLEKEVQKVTDESTKKIDQMADNKRKEIIQG).

This sequence belongs to the RRF family.

Its subcellular location is the cytoplasm. Its function is as follows. Responsible for the release of ribosomes from messenger RNA at the termination of protein biosynthesis. May increase the efficiency of translation by recycling ribosomes from one round of translation to another. This chain is Ribosome-recycling factor, found in Lactobacillus delbrueckii subsp. bulgaricus (strain ATCC 11842 / DSM 20081 / BCRC 10696 / JCM 1002 / NBRC 13953 / NCIMB 11778 / NCTC 12712 / WDCM 00102 / Lb 14).